The following is a 173-amino-acid chain: Thaumatin-like protein PWIR2 (173 aa).

Positions 1 to 20 (MATSPVLFLLLAVFAAGASA) are cleaved as a signal peptide.

Belongs to the thaumatin family.

This Triticum aestivum (Wheat) protein is Thaumatin-like protein PWIR2.